Consider the following 214-residue polypeptide: Ribosomal RNA small subunit methyltransferase G (214 aa).

Residues Gly77, Leu82, 128-129 (VE), and Arg143 each bind S-adenosyl-L-methionine.

This sequence belongs to the methyltransferase superfamily. RNA methyltransferase RsmG family.

It is found in the cytoplasm. It carries out the reaction guanosine(527) in 16S rRNA + S-adenosyl-L-methionine = N(7)-methylguanosine(527) in 16S rRNA + S-adenosyl-L-homocysteine. Its function is as follows. Specifically methylates the N7 position of guanine in position 527 of 16S rRNA. This Nitrosococcus oceani (strain ATCC 19707 / BCRC 17464 / JCM 30415 / NCIMB 11848 / C-107) protein is Ribosomal RNA small subunit methyltransferase G.